The primary structure comprises 78 residues: Probable [Fe-S]-dependent transcriptional repressor (78 aa).

Iron-sulfur cluster contacts are provided by Cys56, Cys61, Cys64, and Cys70.

It belongs to the FeoC family.

Its function is as follows. May function as a transcriptional regulator that controls feoABC expression. In Escherichia coli (strain UTI89 / UPEC), this protein is Probable [Fe-S]-dependent transcriptional repressor.